The primary structure comprises 236 residues: Uridylate kinase (236 aa).

8 to 11 is a binding site for ATP; sequence KLSG. An involved in allosteric activation by GTP region spans residues 16 to 21; that stretch reads GEQGYG. ATP-binding residues include G51 and R55. UMP is bound by residues D70 and 131-138; that span reads TGNPYFST. ATP is bound by residues N159, Y165, and D168.

This sequence belongs to the UMP kinase family. Homohexamer.

The protein resides in the cytoplasm. The enzyme catalyses UMP + ATP = UDP + ADP. It participates in pyrimidine metabolism; CTP biosynthesis via de novo pathway; UDP from UMP (UMPK route): step 1/1. With respect to regulation, allosterically activated by GTP. Inhibited by UTP. In terms of biological role, catalyzes the reversible phosphorylation of UMP to UDP. The chain is Uridylate kinase from Shouchella clausii (strain KSM-K16) (Alkalihalobacillus clausii).